The primary structure comprises 388 residues: Formate-dependent phosphoribosylglycinamide formyltransferase (388 aa).

N(1)-(5-phospho-beta-D-ribosyl)glycinamide contacts are provided by residues 20 to 21 (EL) and E80. Residues R112, K153, 158-163 (SSGKGQ), 193-196 (EEFI), and E201 contribute to the ATP site. In terms of domain architecture, ATP-grasp spans 117-306 (RLAFEKLGLR…EFEIHARAIL (190 aa)). E265 and E277 together coordinate Mg(2+). Residues D284, K352, and 359–360 (RR) contribute to the N(1)-(5-phospho-beta-D-ribosyl)glycinamide site.

This sequence belongs to the PurK/PurT family. In terms of assembly, homodimer.

The catalysed reaction is N(1)-(5-phospho-beta-D-ribosyl)glycinamide + formate + ATP = N(2)-formyl-N(1)-(5-phospho-beta-D-ribosyl)glycinamide + ADP + phosphate + H(+). Its pathway is purine metabolism; IMP biosynthesis via de novo pathway; N(2)-formyl-N(1)-(5-phospho-D-ribosyl)glycinamide from N(1)-(5-phospho-D-ribosyl)glycinamide (formate route): step 1/1. In terms of biological role, involved in the de novo purine biosynthesis. Catalyzes the transfer of formate to 5-phospho-ribosyl-glycinamide (GAR), producing 5-phospho-ribosyl-N-formylglycinamide (FGAR). Formate is provided by PurU via hydrolysis of 10-formyl-tetrahydrofolate. This chain is Formate-dependent phosphoribosylglycinamide formyltransferase, found in Methanococcus maripaludis (strain C5 / ATCC BAA-1333).